Reading from the N-terminus, the 260-residue chain is Cytochrome c oxidase subunit 2 (260 aa).

Residues M1–D43 are Mitochondrial intermembrane-facing. Residues I44 to W64 form a helical membrane-spanning segment. The Mitochondrial matrix segment spans residues H65–E84. Residues I85–L105 form a helical membrane-spanning segment. Over L106–N260 the chain is Mitochondrial intermembrane. H189, C224, E226, C228, H232, and M235 together coordinate Cu cation. Mg(2+) is bound at residue E226.

This sequence belongs to the cytochrome c oxidase subunit 2 family. Component of the cytochrome c oxidase (complex IV, CIV), a multisubunit enzyme composed of a catalytic core of 3 subunits and several supernumerary subunits. The complex exists as a monomer or a dimer and forms supercomplexes (SCs) in the inner mitochondrial membrane with ubiquinol-cytochrome c oxidoreductase (cytochrome b-c1 complex, complex III, CIII). Cu cation serves as cofactor.

It is found in the mitochondrion inner membrane. The catalysed reaction is 4 Fe(II)-[cytochrome c] + O2 + 8 H(+)(in) = 4 Fe(III)-[cytochrome c] + 2 H2O + 4 H(+)(out). In terms of biological role, component of the cytochrome c oxidase, the last enzyme in the mitochondrial electron transport chain which drives oxidative phosphorylation. The respiratory chain contains 3 multisubunit complexes succinate dehydrogenase (complex II, CII), ubiquinol-cytochrome c oxidoreductase (cytochrome b-c1 complex, complex III, CIII) and cytochrome c oxidase (complex IV, CIV), that cooperate to transfer electrons derived from NADH and succinate to molecular oxygen, creating an electrochemical gradient over the inner membrane that drives transmembrane transport and the ATP synthase. Cytochrome c oxidase is the component of the respiratory chain that catalyzes the reduction of oxygen to water. Electrons originating from reduced cytochrome c in the intermembrane space (IMS) are transferred via the dinuclear copper A center (CU(A)) of subunit 2 and heme A of subunit 1 to the active site in subunit 1, a binuclear center (BNC) formed by heme A3 and copper B (CU(B)). The BNC reduces molecular oxygen to 2 water molecules using 4 electrons from cytochrome c in the IMS and 4 protons from the mitochondrial matrix. The protein is Cytochrome c oxidase subunit 2 (COX2) of Triticum aestivum (Wheat).